Reading from the N-terminus, the 371-residue chain is Chaperone protein DnaJ (371 aa).

The J domain occupies 5–69; that stretch reads DYYEILGIAK…QKRAAYDQHG (65 aa). The segment at 127 to 205 adopts a CR-type zinc-finger fold; sequence GASKEIHITT…CRGQGKVEEP (79 aa). Residues cysteine 140, cysteine 143, cysteine 157, cysteine 160, cysteine 179, cysteine 182, cysteine 193, and cysteine 196 each contribute to the Zn(2+) site. CXXCXGXG motif repeat units follow at residues 140–147, 157–164, 179–186, and 193–200; these read CEHCKGSG, CTTCRGVG, CPRCHGQG, and CRQCRGQG.

The protein belongs to the DnaJ family. Homodimer. Requires Zn(2+) as cofactor.

Its subcellular location is the cytoplasm. Functionally, participates actively in the response to hyperosmotic and heat shock by preventing the aggregation of stress-denatured proteins and by disaggregating proteins, also in an autonomous, DnaK-independent fashion. Unfolded proteins bind initially to DnaJ; upon interaction with the DnaJ-bound protein, DnaK hydrolyzes its bound ATP, resulting in the formation of a stable complex. GrpE releases ADP from DnaK; ATP binding to DnaK triggers the release of the substrate protein, thus completing the reaction cycle. Several rounds of ATP-dependent interactions between DnaJ, DnaK and GrpE are required for fully efficient folding. Also involved, together with DnaK and GrpE, in the DNA replication of plasmids through activation of initiation proteins. In Hamiltonella defensa subsp. Acyrthosiphon pisum (strain 5AT), this protein is Chaperone protein DnaJ.